The following is a 482-amino-acid chain: tRNA sulfurtransferase (482 aa).

One can recognise a THUMP domain in the interval L61–R165. ATP is bound by residues L183–I184, K265, G287, and Q296. A disulfide bond links C344 and C456. The 79-residue stretch at F404–P482 folds into the Rhodanese domain. The Cysteine persulfide intermediate role is filled by C456.

The protein belongs to the ThiI family.

It is found in the cytoplasm. The catalysed reaction is [ThiI sulfur-carrier protein]-S-sulfanyl-L-cysteine + a uridine in tRNA + 2 reduced [2Fe-2S]-[ferredoxin] + ATP + H(+) = [ThiI sulfur-carrier protein]-L-cysteine + a 4-thiouridine in tRNA + 2 oxidized [2Fe-2S]-[ferredoxin] + AMP + diphosphate. The enzyme catalyses [ThiS sulfur-carrier protein]-C-terminal Gly-Gly-AMP + S-sulfanyl-L-cysteinyl-[cysteine desulfurase] + AH2 = [ThiS sulfur-carrier protein]-C-terminal-Gly-aminoethanethioate + L-cysteinyl-[cysteine desulfurase] + A + AMP + 2 H(+). Its pathway is cofactor biosynthesis; thiamine diphosphate biosynthesis. Its function is as follows. Catalyzes the ATP-dependent transfer of a sulfur to tRNA to produce 4-thiouridine in position 8 of tRNAs, which functions as a near-UV photosensor. Also catalyzes the transfer of sulfur to the sulfur carrier protein ThiS, forming ThiS-thiocarboxylate. This is a step in the synthesis of thiazole, in the thiamine biosynthesis pathway. The sulfur is donated as persulfide by IscS. This is tRNA sulfurtransferase from Escherichia coli O9:H4 (strain HS).